A 528-amino-acid polypeptide reads, in one-letter code: 2-isopropylmalate synthase (528 aa).

Residues 12–279 (IRIFDTTLRD…DSSINTPRIV (268 aa)) enclose the Pyruvate carboxyltransferase domain. Asp21, His214, His216, and Asn250 together coordinate Mn(2+). Positions 401-528 (RLASMTISDV…STDVPTPATA (128 aa)) are regulatory domain.

It belongs to the alpha-IPM synthase/homocitrate synthase family. LeuA type 1 subfamily. In terms of assembly, homodimer. Requires Mn(2+) as cofactor.

The protein localises to the cytoplasm. The enzyme catalyses 3-methyl-2-oxobutanoate + acetyl-CoA + H2O = (2S)-2-isopropylmalate + CoA + H(+). It functions in the pathway amino-acid biosynthesis; L-leucine biosynthesis; L-leucine from 3-methyl-2-oxobutanoate: step 1/4. Functionally, catalyzes the condensation of the acetyl group of acetyl-CoA with 3-methyl-2-oxobutanoate (2-ketoisovalerate) to form 3-carboxy-3-hydroxy-4-methylpentanoate (2-isopropylmalate). The chain is 2-isopropylmalate synthase from Stenotrophomonas maltophilia (strain K279a).